We begin with the raw amino-acid sequence, 659 residues long: Endoglucanase A (659 aa).

The interval 1–500 is catalytic; sequence MLIFETYLIL…SKLPNFPPKE (500 aa). The active-site Nucleophile is the Asp-101. The disordered stretch occupies residues 413 to 433; the sequence is NSPKHPHHRTAHGSWSNQLTN. Active-site residues include His-419, Asp-457, and Glu-466. A CBM3 domain is found at 501-658; sequence QVEDEFFVEA…GVLVFGTLPD (158 aa).

The protein belongs to the glycosyl hydrolase 9 (cellulase E) family.

The protein resides in the secreted. It catalyses the reaction Endohydrolysis of (1-&gt;4)-beta-D-glucosidic linkages in cellulose, lichenin and cereal beta-D-glucans.. Its activity is regulated as follows. Strongly inhibited by ZnCl(2) and by EDTA. Its function is as follows. Active on carboxymethyl cellulose and carboxymethyl cellulose-RBB but not avicel, xanthan gum, carboxymethyl-curdulan-RBB or carboxymethyl-xylan-RBB. The polypeptide is Endoglucanase A (eglA) (Bacillus pumilus (Bacillus mesentericus)).